The primary structure comprises 389 residues: DNA damage checkpoint control protein RAD17 (389 aa).

Positions 358-389 are disordered; the sequence is LAPPSAFPAEETQDPDESYHPAPSNTDIPLFL. Residues 380–389 show a composition bias toward polar residues; that stretch reads PSNTDIPLFL.

The protein belongs to the rad1 family. As to quaternary structure, component of the checkpoint clamp complex composed of DDC1, MEC3 and RAD17.

Its subcellular location is the nucleus. Component of the checkpoint clamp complex involved in the surveillance mechanism that allows the DNA repair pathways to act to restore the integrity of the DNA prior to DNA synthesis or separation of the replicated chromosomes. The protein is DNA damage checkpoint control protein RAD17 (RAD17) of Eremothecium gossypii (strain ATCC 10895 / CBS 109.51 / FGSC 9923 / NRRL Y-1056) (Yeast).